Reading from the N-terminus, the 416-residue chain is MDVRLHLKQFALLCFISLLLTPCGLACGPGRGYGKRRHPKKLTPLAYKQFIPNVAEKTLGASGKYEGKITRNSERFKELIPNYNPDIIFKDEENTNADRLMTKRCKDKLNSLAISVMNHWPGVKLRVTEGWDEDGHHLEESLHYEGRAVDITTSDRDKSKYGMLSRLAVEAGFDWVYYESKAHIHCSVKAENSVAAKSGGCFPGSGTVTLGDGTRKPIKDLKVGDRVLAADEKGNVLISDFIMFIDHDPTTRRQFIVIETSEPFTKLTLTAAHLVFVGNSSAASGITATFASNVKPGDTVLVWEDTCESLKSVTVKRIYTEEHEGSFAPVTAHGTIIVDQVLASCYAVIENHKWAHWAFAPVRLCHKLMTWLFPARESNVNFQEDGIHWYSNMLFHIGSWLLDRDSFHPLGILHLS.

The signal sequence occupies residues 1–26 (MDVRLHLKQFALLCFISLLLTPCGLA). The N-palmitoyl cysteine moiety is linked to residue Cys-27. Residues Glu-92, Glu-93, Asp-98, Thr-128, Glu-129, Asp-132, and Asp-134 each coordinate Ca(2+). Zn(2+) contacts are provided by His-143, Asp-150, and His-185. Gly-200 carries Cholesterol glycine ester lipidation.

Belongs to the hedgehog family. Multimer. In terms of assembly, interacts with HHATL/GUP1 which negatively regulates HHAT-mediated palmitoylation of the TWHH N-terminus. Interacts with BOC and CDON. Interacts with HHIP. Interacts with DISP1 via its cholesterol anchor. Interacts with SCUBE2. Post-translationally, the C-terminal domain displays an autoproteolysis activity and a cholesterol transferase activity. Both activities result in the cleavage of the full-length protein into two parts (N-product and C-product) followed by the covalent attachment of a cholesterol moiety to the C-terminal of the newly generated N-product. Cholesterylation is required for the tiggy-winkle hedgehog protein N-product targeting to lipid rafts and multimerization. N-product is the active species in both local and long-range signaling, whereas the C-product is degraded in the endoplasmic reticulum. N-palmitoylation by HHAT of N-product is required for tiggy-winkle hedgehog protein N-product multimerization and full activity. It is a prerequisite for the membrane-proximal positioning and the subsequent shedding of this N-terminal peptide. In terms of processing, the lipidated N- and C-terminal peptides of N-product can be cleaved (shedding). The N-terminal palmitoylated peptide is cleaved at the Cardin-Weintraub (CW) motif site. The cleavage reduced the interactions with heparan sulfate. The cleavage is enhanced by SCUBE2. In terms of tissue distribution, expressed in the ventral midline of the neural tube and brain. In the developing brain, expression occurs in domains that include a discrete region in the floor of the diencephalon. Not detected in the notochord or developing fin bud.

It is found in the cell membrane. The protein resides in the endoplasmic reticulum membrane. Its subcellular location is the golgi apparatus membrane. Functionally, the C-terminal part of the tiggy-winkle hedgehog protein precursor displays an autoproteolysis and a cholesterol transferase activity. Both activities result in the cleavage of the full-length protein into two parts (N-product and C-product) followed by the covalent attachment of a cholesterol moiety to the C-terminal of the newly generated N-product. Both activities occur in the endoplasmic reticulum. Once cleaved, the C-product is degraded in the endoplasmic reticulum. The dually lipidated tiggy-winkle hedgehog protein N-product is a morphogen which is essential for a variety of patterning events during development. Involved in dorso-ventral patterning of the brain and in early patterning of the developing eyes. Binds to the patched (PTCH1) receptor, which functions in association with smoothened (SMO), to activate the transcription of target genes. This is Tiggy-winkle hedgehog protein (shhb) from Danio rerio (Zebrafish).